The primary structure comprises 100 residues: UPF0213 protein YhbQ (100 aa).

The GIY-YIG domain occupies 2–77 (TPWFLYLIRT…KQLTKRQKER (76 aa)).

The protein belongs to the UPF0213 family.

The polypeptide is UPF0213 protein YhbQ (Escherichia coli O17:K52:H18 (strain UMN026 / ExPEC)).